The primary structure comprises 409 residues: Serine protease inhibitor 2 (409 aa).

The signal sequence occupies residues 1–21 (MNKLNFVILCLAALLVFDATA). Asparagine 294 and asparagine 324 each carry an N-linked (GlcNAc...) asparagine glycan. The Hinge region; required for binding to peptidase motif lies at 356–360 (LGSEA).

It belongs to the serpin family. As to quaternary structure, forms a covalent heterodimer with protease CLIPB9; the interaction inhibits CLIPB9 protease activity. Forms a covalent heterodimer with protease CLIPB10; the interaction inhibits CLIPB10 catalytic activity. Interacts with CLIPB4 in the hemolymph of immune-challenged female mosquitoes; the interaction results in CLIPB4 inhibition. Protease CLIPB9 binds to SRPN2 via the hinge region resulting in the cleavage of the reactive bond. This leads to a conformational change in SRPN2 which traps CLIPB9 and distorts its active site, resulting in CLIPB9 inactivation.

It localises to the secreted. In terms of biological role, serine protease inhibitor that functions in the melanization-mediated immune response. By preventing the activation of phenoloxidases through the inhibiting of serine proteases CLIPB9, CLIPB10 and CLIPB4, negatively regulates melanization in the hemolymph. By preventing melanization, has a detrimental role during P.berghei parasite mediated-infection and invasion of the mosquito midgut. The sequence is that of Serine protease inhibitor 2 from Anopheles gambiae (African malaria mosquito).